Consider the following 406-residue polypeptide: Tyrosine--tRNA ligase (406 aa).

Residue Y35 participates in L-tyrosine binding. A 'HIGH' region motif is present at residues 40–49 (PTADSLHVGH). L-tyrosine is bound by residues Y168 and Q172. A 'KMSKS' region motif is present at residues 228-232 (KMGKT). K231 lines the ATP pocket. The 66-residue stretch at 340–405 (STVLDVIAKV…GKKNYNKIEI (66 aa)) folds into the S4 RNA-binding domain.

Belongs to the class-I aminoacyl-tRNA synthetase family. TyrS type 1 subfamily. As to quaternary structure, homodimer.

It is found in the cytoplasm. The enzyme catalyses tRNA(Tyr) + L-tyrosine + ATP = L-tyrosyl-tRNA(Tyr) + AMP + diphosphate + H(+). Catalyzes the attachment of tyrosine to tRNA(Tyr) in a two-step reaction: tyrosine is first activated by ATP to form Tyr-AMP and then transferred to the acceptor end of tRNA(Tyr). The protein is Tyrosine--tRNA ligase of Clostridium botulinum (strain Eklund 17B / Type B).